The following is a 156-amino-acid chain: Ribosomal RNA large subunit methyltransferase H (156 aa).

S-adenosyl-L-methionine is bound by residues leucine 73, glycine 104, and valine 123–leucine 128.

It belongs to the RNA methyltransferase RlmH family. Homodimer.

Its subcellular location is the cytoplasm. It catalyses the reaction pseudouridine(1915) in 23S rRNA + S-adenosyl-L-methionine = N(3)-methylpseudouridine(1915) in 23S rRNA + S-adenosyl-L-homocysteine + H(+). Its function is as follows. Specifically methylates the pseudouridine at position 1915 (m3Psi1915) in 23S rRNA. In Paraburkholderia xenovorans (strain LB400), this protein is Ribosomal RNA large subunit methyltransferase H.